A 155-amino-acid polypeptide reads, in one-letter code: 6,7-dimethyl-8-ribityllumazine synthase (155 aa).

5-amino-6-(D-ribitylamino)uracil contacts are provided by residues phenylalanine 23, 57–59 (AFE), and 81–83 (AVI). 86-87 (AT) is a (2S)-2-hydroxy-3-oxobutyl phosphate binding site. Histidine 89 (proton donor) is an active-site residue. Phenylalanine 114 is a binding site for 5-amino-6-(D-ribitylamino)uracil. Arginine 128 is a (2S)-2-hydroxy-3-oxobutyl phosphate binding site.

This sequence belongs to the DMRL synthase family.

The enzyme catalyses (2S)-2-hydroxy-3-oxobutyl phosphate + 5-amino-6-(D-ribitylamino)uracil = 6,7-dimethyl-8-(1-D-ribityl)lumazine + phosphate + 2 H2O + H(+). It functions in the pathway cofactor biosynthesis; riboflavin biosynthesis; riboflavin from 2-hydroxy-3-oxobutyl phosphate and 5-amino-6-(D-ribitylamino)uracil: step 1/2. Its function is as follows. Catalyzes the formation of 6,7-dimethyl-8-ribityllumazine by condensation of 5-amino-6-(D-ribitylamino)uracil with 3,4-dihydroxy-2-butanone 4-phosphate. This is the penultimate step in the biosynthesis of riboflavin. The chain is 6,7-dimethyl-8-ribityllumazine synthase from Geotalea uraniireducens (strain Rf4) (Geobacter uraniireducens).